The following is a 286-amino-acid chain: Probable biotin transporter (286 aa).

EamA domains are found at residues 3–128 and 139–277; these read YLLF…AIIR and GFLL…LWVN. Helical transmembrane passes span 4–24, 26–46, 56–76, 81–101, 109–129, 136–156, 174–194, 203–223, 234–254, and 258–280; these read LLFV…YLAG, VDSY…FLPL, FVGG…VCLY, VLTV…VALF, FNFW…IIRY, FLQG…GQVL, FGYF…LFGD, LQWG…QFWW, TLAV…LLIW, and ADLP…NRLG.

It belongs to the drug/metabolite transporter (DMT) superfamily. 10 TMS drug/metabolite exporter (DME) (TC 2.A.7.3) family.

The protein resides in the cell inner membrane. It carries out the reaction biotin(in) = biotin(out). In terms of biological role, uptake of biotin. This is Probable biotin transporter from Pseudomonas aeruginosa (strain ATCC 15692 / DSM 22644 / CIP 104116 / JCM 14847 / LMG 12228 / 1C / PRS 101 / PAO1).